A 226-amino-acid chain; its full sequence is Purine nucleoside phosphorylase Cj1217c (226 aa).

Zn(2+) contacts are provided by His-58, Cys-93, and His-109.

Belongs to the purine nucleoside phosphorylase YfiH/LACC1 family. Homodimer. It depends on Cu(2+) as a cofactor. Zn(2+) serves as cofactor.

The catalysed reaction is adenosine + phosphate = alpha-D-ribose 1-phosphate + adenine. It catalyses the reaction S-methyl-5'-thioadenosine + phosphate = 5-(methylsulfanyl)-alpha-D-ribose 1-phosphate + adenine. It carries out the reaction inosine + phosphate = alpha-D-ribose 1-phosphate + hypoxanthine. The enzyme catalyses adenosine + H2O + H(+) = inosine + NH4(+). In terms of biological role, purine nucleoside enzyme that catalyzes the phosphorolysis of adenosine and inosine nucleosides, yielding D-ribose 1-phosphate and the respective free bases, adenine and hypoxanthine. Also catalyzes the phosphorolysis of S-methyl-5'-thioadenosine into adenine and S-methyl-5-thio-alpha-D-ribose 1-phosphate. Also has adenosine deaminase activity. The chain is Purine nucleoside phosphorylase Cj1217c from Campylobacter jejuni subsp. jejuni serotype O:2 (strain ATCC 700819 / NCTC 11168).